Consider the following 187-residue polypeptide: Glutathione-dependent formaldehyde-activating enzyme (187 aa).

Positions 20–167 constitute a CENP-V/GFA domain; the sequence is FAGGTLVCKC…LKELGLEPYD (148 aa). Residues Cys-27, Cys-29, Cys-48, Cys-50, Cys-53, Cys-95, and Cys-98 each coordinate Zn(2+).

Belongs to the Gfa family. Requires Zn(2+) as cofactor.

The enzyme catalyses S-(hydroxymethyl)glutathione = glutathione + formaldehyde. Its pathway is one-carbon metabolism; formaldehyde degradation; formate from formaldehyde (glutathione route): step 1/3. Its function is as follows. Catalyzes the condensation of formaldehyde and glutathione to S-hydroxymethylglutathione. The protein is Glutathione-dependent formaldehyde-activating enzyme of Bradyrhizobium sp. (strain BTAi1 / ATCC BAA-1182).